Consider the following 1361-residue polypeptide: DNA-directed RNA polymerase subunit beta'' (1361 aa).

4 residues coordinate Zn(2+): cysteine 224, cysteine 295, cysteine 302, and cysteine 305.

Belongs to the RNA polymerase beta' chain family. RpoC2 subfamily. As to quaternary structure, in plastids the minimal PEP RNA polymerase catalytic core is composed of four subunits: alpha, beta, beta', and beta''. When a (nuclear-encoded) sigma factor is associated with the core the holoenzyme is formed, which can initiate transcription. Zn(2+) is required as a cofactor.

It is found in the plastid. It localises to the chloroplast. It catalyses the reaction RNA(n) + a ribonucleoside 5'-triphosphate = RNA(n+1) + diphosphate. DNA-dependent RNA polymerase catalyzes the transcription of DNA into RNA using the four ribonucleoside triphosphates as substrates. The polypeptide is DNA-directed RNA polymerase subunit beta'' (Spinacia oleracea (Spinach)).